Here is a 420-residue protein sequence, read N- to C-terminus: Melatonin receptor type 1C (420 aa).

Topologically, residues 1 to 34 (MMEVNSTCLDCRTPGTIRTEQDAQDSASQGLTSA) are extracellular. N-linked (GlcNAc...) asparagine glycosylation is present at Asn-5. The helical transmembrane segment at 35-55 (LAVVLIFTIVVDVLGNILVIL) threads the bilayer. The Cytoplasmic segment spans residues 56–73 (SVLRNKKLQNAGNLFVVS). A helical membrane pass occupies residues 74 to 94 (LSIADLVVAVYPYPVILIAIF). Residues 95–106 (QNGWTLGNIHCQ) are Extracellular-facing. Residues Cys-105 and Cys-182 are joined by a disulfide bond. The chain crosses the membrane as a helical span at residues 107 to 127 (ISGFLMGLSVIGSVFNITAIA). The Cytoplasmic segment spans residues 128–152 (INRYCYICHSLRYDKLYNQRSTWCY). A helical transmembrane segment spans residues 153 to 173 (LGLTWILTIIAIVPNFFVGSL). The Extracellular segment spans residues 174 to 192 (QYDPRIFSCTFAQTVSSSY). The helical transmembrane segment at 193–213 (TITVVVVHFIVPLSVVTFCYL) threads the bilayer. Residues 214 to 245 (RIWVLVIQVKHRVRQDFKQKLTQTDLRNFLTM) are Cytoplasmic-facing. A helical transmembrane segment spans residues 246-266 (FVVFVLFAVCWAPLNFIGLAV). Topologically, residues 267 to 279 (AINPFHVAPKIPE) are extracellular. A helical transmembrane segment spans residues 280-303 (WLFVLSYFMAYFNSCLNAVIYGVL). Residues 304-420 (NQNFRKEYKR…ELCKDGISQR (117 aa)) lie on the Cytoplasmic side of the membrane.

This sequence belongs to the G-protein coupled receptor 1 family. Moderately expressed in dermal melanophores.

The protein localises to the cell membrane. Functionally, high affinity receptor for melatonin. Likely to mediate the potent effects of melatonin on pigment aggregation in melanophores. The activity of this receptor is mediated by pertussis toxin sensitive G proteins that inhibit adenylate cyclase activity. This is Melatonin receptor type 1C (mtnr1c) from Xenopus laevis (African clawed frog).